A 709-amino-acid polypeptide reads, in one-letter code: ATP-binding cassette sub-family F member 3 (709 aa).

An N-acetylalanine modification is found at alanine 2. The segment covering 129-143 (RLKAKQEKRSEKETL) has biased composition (basic and acidic residues). Residues 129-171 (RLKAKQEKRSEKETLKTSSPLVLEEASASQAGSRKESRLESSG) form a disordered region. Phosphoserine occurs at positions 155, 157, and 161. Basic and acidic residues predominate over residues 161-171 (SRKESRLESSG). 2 ABC transporter domains span residues 178 to 424 (VRIE…LNQQ) and 492 to 707 (LQLD…RREG). ATP is bound at residue 210–217 (GRNGLGKT). Residue serine 283 is modified to Phosphoserine. 525 to 532 (GENGAGKS) is a binding site for ATP.

This sequence belongs to the ABC transporter superfamily. ABCF family. EF3 subfamily.

Displays an antiviral effect against flaviviruses such as west Nile virus (WNV) in the presence of OAS1B. The sequence is that of ATP-binding cassette sub-family F member 3 (Abcf3) from Rattus norvegicus (Rat).